A 437-amino-acid polypeptide reads, in one-letter code: Vacuolar protein sorting-associated protein 4A (437 aa).

Positions 2–80 (TTSTLQKAID…KDYLRNKEKH (79 aa)) constitute an MIT domain. The residue at position 8 (K8) is an N6-acetyllysine. Residues 15–37 (KATEEDKAKNYEEALRLYQHAVE) adopt a coiled-coil conformation. Residues 75-106 (RNKEKHGKKPVKENQSEGKGSDSDSEGDNPEK) form a disordered region. The span at 84–96 (PVKENQSEGKGSD) shows a compositional bias: basic and acidic residues. A phosphoserine mark is found at S95 and S97. 167-174 (GPPGTGKS) contacts ATP.

This sequence belongs to the AAA ATPase family. Proposed to be monomeric or homodimeric in nucleotide-free form and to oligomerize upon binding to ATP to form two stacked hexameric or heptameric rings with a central pore through which ESCRT-III substrates are translocated in an ATP-dependent manner. Interacts with CHMP1A, CHMP1B, CHMP2A, CHMP2B, CHMP3, CHMP4A, CHMP4B, CHMP4C and CHMP6. Interacts with VPS4B; the interaction suggests a heteromeric assembly with VPS4B. Interacts with SPAST. Interacts with IST1. Interacts with ZFYVE19/ANCHR; leading to retain it at midbody. Highly expressed in testis and moderately in heart and brain. Not detected in spleen, lung, liver, skeletal muscle or kidney.

It localises to the late endosome membrane. Its subcellular location is the midbody. The protein resides in the cytoplasm. It is found in the cytoskeleton. The protein localises to the spindle. The catalysed reaction is ATP + H2O = ADP + phosphate + H(+). Its function is as follows. Involved in late steps of the endosomal multivesicular bodies (MVB) pathway. Recognizes membrane-associated ESCRT-III assemblies and catalyzes their disassembly, possibly in combination with membrane fission. Redistributes the ESCRT-III components to the cytoplasm for further rounds of MVB sorting. MVBs contain intraluminal vesicles (ILVs) that are generated by invagination and scission from the limiting membrane of the endosome and mostly are delivered to lysosomes enabling degradation of membrane proteins, such as stimulated growth factor receptors, lysosomal enzymes and lipids. It is required for proper accomplishment of various processes including the regulation of endosome size, primary cilium organization, mitotic spindle organization and chromosome segregation, and nuclear envelope sealing and spindle disassembly during anaphase. In conjunction with the ESCRT machinery also appears to function in topologically equivalent membrane fission events, such as the terminal stages of cytokinesis. Involved in cytokinesis: retained at the midbody by ZFYVE19/ANCHR and CHMP4C until abscission checkpoint signaling is terminated at late cytokinesis. It is then released following dephosphorylation of CHMP4C, leading to abscission. VPS4A/B are required for the exosomal release of SDCBP, CD63 and syndecan. Critical for normal erythroblast cytokinesis and correct erythropoiesis. This Mus musculus (Mouse) protein is Vacuolar protein sorting-associated protein 4A.